A 506-amino-acid polypeptide reads, in one-letter code: Maturase K (506 aa).

Belongs to the intron maturase 2 family. MatK subfamily.

The protein resides in the plastid. The protein localises to the chloroplast. Functionally, usually encoded in the trnK tRNA gene intron. Probably assists in splicing its own and other chloroplast group II introns. The polypeptide is Maturase K (Sullivantia sullivantii (Sullivant's coolwort)).